A 705-amino-acid chain; its full sequence is Kinesin-like protein KIF2A (705 aa).

The segment at Met-1 to Asp-216 is globular. Positions Asp-65–Asp-186 are disordered. Ser-75 is subject to Phosphoserine. Thr-96 is subject to Phosphothreonine. Lys-101 is subject to N6-acetyllysine. Over residues Leu-122–Ser-139 the composition is skewed to polar residues. 2 positions are modified to phosphoserine: Ser-134 and Ser-139. Residues Cys-158–Asp-186 show a composition bias toward basic and acidic residues. Positions Arg-222–Leu-552 constitute a Kinesin motor domain. Gly-312 to Thr-319 lines the ATP pocket. Phosphoserine occurs at positions 528 and 545. Residues Ala-659–Asn-698 are a coiled coil.

The protein belongs to the TRAFAC class myosin-kinesin ATPase superfamily. Kinesin family. MCAK/KIF2 subfamily. In terms of assembly, interacts with AURKA and PLK1. Interacts with PSRC1. Interacts with MCRS1; the interaction enhances recruitment of KIF2A to the minus ends of spindle microtubules which promotes chromosome alignment. Highest level in lung. High level in ovary, moderate levels in heart, kidney, placenta, skeletal muscle and spleen (at protein level). Pancreas and spleen express a shorter isoform (at protein level). Expressed in the flagellum of elongated spermatids and sperm in the testis lumen (at protein level). Isoform 1 expressed in neuronal cells. Isoform 2 expressed in astrocytes and fibroblasts.

The protein localises to the cytoplasm. It localises to the cytoskeleton. It is found in the microtubule organizing center. The protein resides in the centrosome. Its subcellular location is the spindle pole. The protein localises to the spindle. It localises to the lysosome. In terms of biological role, plus end-directed microtubule-dependent motor required for normal brain development. May regulate microtubule dynamics during axonal growth. Required for normal progression through mitosis. Required for normal congress of chromosomes at the metaphase plate. Required for normal spindle dynamics during mitosis. Promotes spindle turnover. Implicated in formation of bipolar mitotic spindles. Has microtubule depolymerization activity. The protein is Kinesin-like protein KIF2A (Kif2a) of Mus musculus (Mouse).